Here is a 229-residue protein sequence, read N- to C-terminus: Cytidylate kinase (229 aa).

Gly12–Ser20 is a binding site for ATP.

The protein belongs to the cytidylate kinase family. Type 1 subfamily.

Its subcellular location is the cytoplasm. The catalysed reaction is CMP + ATP = CDP + ADP. It carries out the reaction dCMP + ATP = dCDP + ADP. This chain is Cytidylate kinase, found in Rhodococcus jostii (strain RHA1).